The chain runs to 194 residues: ATP-dependent Clp protease proteolytic subunit (194 aa).

Ser97 acts as the Nucleophile in catalysis. Residue His122 is part of the active site.

Belongs to the peptidase S14 family. In terms of assembly, fourteen ClpP subunits assemble into 2 heptameric rings which stack back to back to give a disk-like structure with a central cavity, resembling the structure of eukaryotic proteasomes.

It is found in the cytoplasm. The catalysed reaction is Hydrolysis of proteins to small peptides in the presence of ATP and magnesium. alpha-casein is the usual test substrate. In the absence of ATP, only oligopeptides shorter than five residues are hydrolyzed (such as succinyl-Leu-Tyr-|-NHMec, and Leu-Tyr-Leu-|-Tyr-Trp, in which cleavage of the -Tyr-|-Leu- and -Tyr-|-Trp bonds also occurs).. Its function is as follows. Cleaves peptides in various proteins in a process that requires ATP hydrolysis. Has a chymotrypsin-like activity. Plays a major role in the degradation of misfolded proteins. This is ATP-dependent Clp protease proteolytic subunit from Carsonella ruddii (strain PV).